The chain runs to 179 residues: ADP-ribosylation factor (179 aa).

Glycine 2 carries N-myristoyl glycine lipidation. Residues 24–31 (GLDAAGKT), 67–71 (DVGGQ), and 126–129 (NKQD) each bind GTP.

Belongs to the small GTPase superfamily. Arf family.

It localises to the golgi apparatus. Its function is as follows. GTP-binding protein involved in protein trafficking; may modulate vesicle budding and uncoating within the Golgi apparatus. The protein is ADP-ribosylation factor (ARF1) of Candida albicans (strain SC5314 / ATCC MYA-2876) (Yeast).